Reading from the N-terminus, the 227-residue chain is tRNA (guanine-N(1)-)-methyltransferase (227 aa).

S-adenosyl-L-methionine contacts are provided by residues G112 and 132 to 137 (LGDFVL).

The protein belongs to the RNA methyltransferase TrmD family. In terms of assembly, homodimer.

It localises to the cytoplasm. The enzyme catalyses guanosine(37) in tRNA + S-adenosyl-L-methionine = N(1)-methylguanosine(37) in tRNA + S-adenosyl-L-homocysteine + H(+). Specifically methylates guanosine-37 in various tRNAs. The sequence is that of tRNA (guanine-N(1)-)-methyltransferase from Gloeobacter violaceus (strain ATCC 29082 / PCC 7421).